The following is a 553-amino-acid chain: Glutamyl-tRNA(Gln) amidotransferase subunit B, mitochondrial (553 aa).

Residues 1–18 (MAASTSGYSGVLFRLRKY) constitute a mitochondrion transit peptide.

It belongs to the GatB/GatE family. GatB subfamily. As to quaternary structure, subunit of the heterotrimeric GatCAB amidotransferase (AdT) complex, composed of A (qrsl1), B (gatb) and C (gatc) subunits.

It localises to the mitochondrion. The catalysed reaction is L-glutamyl-tRNA(Gln) + L-glutamine + ATP + H2O = L-glutaminyl-tRNA(Gln) + L-glutamate + ADP + phosphate + H(+). Functionally, allows the formation of correctly charged Gln-tRNA(Gln) through the transamidation of misacylated Glu-tRNA(Gln) in the mitochondria. The reaction takes place in the presence of glutamine and ATP through an activated gamma-phospho-Glu-tRNA(Gln). This chain is Glutamyl-tRNA(Gln) amidotransferase subunit B, mitochondrial, found in Danio rerio (Zebrafish).